The following is a 263-amino-acid chain: MGYLKRLVLYIVIMVMSVFIIGCDKSSDTAENPKEGSKEAQIKKSFSKTLDMYPIKNLENLYDKEGYRDGEFKKGDKGTWTISTDFAKSNKQGEMNSEGMVLHFNRNTRTATGYYTVRTTYDEVDKLAREKKYRVEFKNNKIVLLDKVEDENLKQKIENFKFFGQYADFKDLKNYKNGRISSNENVPYYEAEYKRNNSDGNVKKLREKYPITTKQSPILKLHIDGDIKGSSVGYKQIEYTFSKEKDDETFMSDFLNFGPSHSK.

The first 22 residues, 1 to 22, serve as a signal peptide directing secretion; it reads MGYLKRLVLYIVIMVMSVFIIG. Cys23 carries the N-palmitoyl cysteine lipid modification. Cys23 is lipidated: S-diacylglycerol cysteine.

Belongs to the staphylococcal tandem lipoprotein family.

The protein resides in the cell membrane. This is an uncharacterized protein from Staphylococcus aureus (strain N315).